Consider the following 106-residue polypeptide: Small ribosomal subunit protein uS10 (106 aa).

Belongs to the universal ribosomal protein uS10 family. As to quaternary structure, part of the 30S ribosomal subunit.

Involved in the binding of tRNA to the ribosomes. The chain is Small ribosomal subunit protein uS10 from Mesomycoplasma hyopneumoniae (strain 232) (Mycoplasma hyopneumoniae).